A 309-amino-acid chain; its full sequence is HPr kinase/phosphorylase (309 aa).

Active-site residues include His139 and Lys160. An ATP-binding site is contributed by 154–161 (GESGIGKS). Ser161 provides a ligand contact to Mg(2+). The active-site Proton acceptor; for phosphorylation activity. Proton donor; for dephosphorylation activity is Asp178. The tract at residues 202–211 (IELRGIGIID) is important for the catalytic mechanism of both phosphorylation and dephosphorylation. Glu203 lines the Mg(2+) pocket. Residue Arg244 is part of the active site. The segment at 265-270 (PIRPGR) is important for the catalytic mechanism of dephosphorylation.

The protein belongs to the HPrK/P family. Homohexamer. Mg(2+) is required as a cofactor.

It catalyses the reaction [HPr protein]-L-serine + ATP = [HPr protein]-O-phospho-L-serine + ADP + H(+). The catalysed reaction is [HPr protein]-O-phospho-L-serine + phosphate + H(+) = [HPr protein]-L-serine + diphosphate. Its function is as follows. Catalyzes the ATP- as well as the pyrophosphate-dependent phosphorylation of a specific serine residue in HPr, a phosphocarrier protein of the phosphoenolpyruvate-dependent sugar phosphotransferase system (PTS). HprK/P also catalyzes the pyrophosphate-producing, inorganic phosphate-dependent dephosphorylation (phosphorolysis) of seryl-phosphorylated HPr (P-Ser-HPr). The two antagonistic activities of HprK/P are regulated by several intracellular metabolites, which change their concentration in response to the absence or presence of rapidly metabolisable carbon sources (glucose, fructose, etc.) in the growth medium. Therefore, by controlling the phosphorylation state of HPr, HPrK/P is a sensor enzyme that plays a major role in the regulation of carbon metabolism and sugar transport: it mediates carbon catabolite repression (CCR), and regulates PTS-catalyzed carbohydrate uptake and inducer exclusion. The protein is HPr kinase/phosphorylase of Lachnoclostridium phytofermentans (strain ATCC 700394 / DSM 18823 / ISDg) (Clostridium phytofermentans).